The following is a 195-amino-acid chain: MKAFRVHTGIVAPLVRPNVDTDQIIPKQFLKRIERTGFGPFLFFDWRFDEAGNPKSDFVLNQSGYKGASILVGGKNFGCGSSREHAPWAIEDFGFRVVIAPTFADIFHNNCRNSGVLAIVTSQENVDAIAARAEKNPGYQLTVDLEKGTISGADGLSIDFEVDGFTRRCFLEGLDDIGLTLRHADAIADYEKAHA.

This sequence belongs to the LeuD family. LeuD type 1 subfamily. In terms of assembly, heterodimer of LeuC and LeuD.

It carries out the reaction (2R,3S)-3-isopropylmalate = (2S)-2-isopropylmalate. It participates in amino-acid biosynthesis; L-leucine biosynthesis; L-leucine from 3-methyl-2-oxobutanoate: step 2/4. In terms of biological role, catalyzes the isomerization between 2-isopropylmalate and 3-isopropylmalate, via the formation of 2-isopropylmaleate. This Koribacter versatilis (strain Ellin345) protein is 3-isopropylmalate dehydratase small subunit.